Consider the following 762-residue polypeptide: Primary amine oxidase, lung isozyme (762 aa).

The N-terminal stretch at 1–16 is a signal peptide; sequence MFIFIFLSLWTLLVMG. Residues 23–54 are disordered; that stretch reads GSEEGVGKQCHPSLPPRCPSRSPSDQPWTHPD. An N-linked (GlcNAc...) asparagine glycan is attached at asparagine 136. An intrachain disulfide couples cysteine 197 to cysteine 198. The O-linked (GalNAc...) threonine glycan is linked to threonine 211. Asparagine 231 and asparagine 293 each carry an N-linked (GlcNAc...) asparagine glycan. 383–393 lines the substrate pocket; that stretch reads YMDACFGMGKF. The Proton acceptor role is filled by aspartate 385. Cysteine 403 and cysteine 429 are joined by a disulfide. Position 467–472 (467–472) interacts with substrate; the sequence is LLNYDY. Tyrosine 470 (schiff-base intermediate with substrate; via topaquinone) is an active-site residue. 2',4',5'-topaquinone is present on tyrosine 470. Residues histidine 519 and histidine 521 each coordinate Cu cation. Ca(2+) is bound by residues aspartate 528, leucine 529, aspartate 530, and glutamate 571. 577–584 is a binding site for heparin; it reads PLGGGSPR. Asparagine 617 is a glycosylation site (N-linked (GlcNAc...) asparagine). Ca(2+) is bound by residues phenylalanine 662 and asparagine 664. Asparagine 665 carries an N-linked (GlcNAc...) asparagine glycan. Glutamate 666, aspartate 672, and leucine 673 together coordinate Ca(2+). Cu cation is bound at residue histidine 683. Cysteine 733 and cysteine 740 are oxidised to a cystine.

The protein belongs to the copper/topaquinone oxidase family. In terms of assembly, homodimer; disulfide-linked. The cofactor is Cu cation. Ca(2+) serves as cofactor. Requires L-topaquinone as cofactor. Post-translationally, topaquinone (TPQ) is generated by copper-dependent autoxidation of a specific tyrosyl residue. As to expression, expressed in lung, spleen, heart and kidney.

It is found in the secreted. The protein localises to the extracellular space. The enzyme catalyses a primary methyl amine + O2 + H2O = an aldehyde + H2O2 + NH4(+). This Bos taurus (Bovine) protein is Primary amine oxidase, lung isozyme.